We begin with the raw amino-acid sequence, 118 residues long: Large ribosomal subunit protein uL18 (118 aa).

The protein belongs to the universal ribosomal protein uL18 family. In terms of assembly, part of the 50S ribosomal subunit; part of the 5S rRNA/L5/L18/L25 subcomplex. Contacts the 5S and 23S rRNAs.

Functionally, this is one of the proteins that bind and probably mediate the attachment of the 5S RNA into the large ribosomal subunit, where it forms part of the central protuberance. This chain is Large ribosomal subunit protein uL18, found in Zymomonas mobilis subsp. mobilis (strain ATCC 31821 / ZM4 / CP4).